The following is an 842-amino-acid chain: MDIRKAYLDFFASKGHEITPSSPLVPDDATLLFTNAGMVPFKSIFTGEIPRPNPPRKTSCQTCIRAGGKHNDLDNVGYTARHHTFFEMLGNFSFGDYFKEQAIAYAWEFVTEVLKLPKDRLYVTVHENDDEAFNLWQKHIQKERIYKFGDKDNFWQMGDTGPCGPCSEIFYDQGQEHFNSSEDYMGGDGDRFLEIWNLVFMQYERSADGVLSPLPKPSIDTGMGLERVTAIKEGKFSNFDSSLFMPIINEISKLCNKTYVYESGASFRVIADHIRSSVFLLAQGVSFDKEGRGYVLRRILRRALRHGYLLGFKQAFMYKLVDIVCDLMGGHYTYLNEKKDFIKEQIRLEEERFLSTIENGIEIFNEELKNTKEIFSGEVAFKLYDTYGFPLDLTADMLREKNLKVDEEKFELFMNEQKARAKASWKGSGDKTASGDFKNLLEKFGENHFVGYEKAECESKILALLDEDFKEVSTLKDAGWVMLENTPFYATSGGQSADSGFIAKREVLDTQKFFNLNLSFIKAGEELKVNDIVHARIDTEKREQIARHHSATHLLHHALREILGSHVSQAGSLVESNKLRFDFTHHKALNKEELESIEKRVNKMIINSSEAILENMPLEEAKKSGAIALFNEKYQGNVRVLTLGESKELCGGTHVKNTAQIGSFYIVKESGVSAGVRRIEAVVSKAALEFVKNQLEELSKVKDELKNNDILSGIKKLKNEILSLKNELKNSSKTELDSKNIQGVEICVKRIDNGDIKAMIDDFKNKFAKAVILLIQVKDEKITLAAGVKDVPLKAGALVKEAAQILGGNGGGRDDFATAGGKDLSKINEALKQSLETIEKAL.

The Zn(2+) site is built by His549, His553, Cys650, and His654.

Belongs to the class-II aminoacyl-tRNA synthetase family. Zn(2+) is required as a cofactor.

The protein localises to the cytoplasm. It carries out the reaction tRNA(Ala) + L-alanine + ATP = L-alanyl-tRNA(Ala) + AMP + diphosphate. In terms of biological role, catalyzes the attachment of alanine to tRNA(Ala) in a two-step reaction: alanine is first activated by ATP to form Ala-AMP and then transferred to the acceptor end of tRNA(Ala). Also edits incorrectly charged Ser-tRNA(Ala) and Gly-tRNA(Ala) via its editing domain. The protein is Alanine--tRNA ligase of Campylobacter jejuni (strain RM1221).